The chain runs to 565 residues: Oxygen-dependent choline dehydrogenase (565 aa).

7–36 (DYIICGAGSAGNVLATRLTEDPDVTVLLLE) is an FAD binding site. The active-site Proton acceptor is the histidine 474.

Belongs to the GMC oxidoreductase family. The cofactor is FAD.

It carries out the reaction choline + A = betaine aldehyde + AH2. It catalyses the reaction betaine aldehyde + NAD(+) + H2O = glycine betaine + NADH + 2 H(+). It functions in the pathway amine and polyamine biosynthesis; betaine biosynthesis via choline pathway; betaine aldehyde from choline (cytochrome c reductase route): step 1/1. Involved in the biosynthesis of the osmoprotectant glycine betaine. Catalyzes the oxidation of choline to betaine aldehyde and betaine aldehyde to glycine betaine at the same rate. This Burkholderia thailandensis (strain ATCC 700388 / DSM 13276 / CCUG 48851 / CIP 106301 / E264) protein is Oxygen-dependent choline dehydrogenase.